The primary structure comprises 508 residues: UDP-N-acetylmuramoyl-L-alanyl-D-glutamate--L-lysine ligase (508 aa).

Ser47 contributes to the UDP-N-acetyl-alpha-D-muramoyl-L-alanyl-D-glutamate binding site. 124–130 (GTKGKTT) is an ATP binding site. UDP-N-acetyl-alpha-D-muramoyl-L-alanyl-D-glutamate is bound by residues 168 to 169 (TT), Ser195, and Arg203. An N6-carboxylysine modification is found at Lys237. Residues 425 to 428 (DDPA) carry the L-lysine recognition motif motif.

This sequence belongs to the MurCDEF family. MurE subfamily. Post-translationally, carboxylation is probably crucial for Mg(2+) binding and, consequently, for the gamma-phosphate positioning of ATP.

The protein resides in the cytoplasm. It carries out the reaction UDP-N-acetyl-alpha-D-muramoyl-L-alanyl-D-glutamate + L-lysine + ATP = UDP-N-acetyl-alpha-D-muramoyl-L-alanyl-gamma-D-glutamyl-L-lysine + ADP + phosphate + H(+). The protein operates within cell wall biogenesis; peptidoglycan biosynthesis. Its function is as follows. Catalyzes the addition of L-lysine to the nucleotide precursor UDP-N-acetylmuramoyl-L-alanyl-D-glutamate (UMAG) in the biosynthesis of bacterial cell-wall peptidoglycan. This is UDP-N-acetylmuramoyl-L-alanyl-D-glutamate--L-lysine ligase from Enterococcus faecalis (strain ATCC 700802 / V583).